Reading from the N-terminus, the 410-residue chain is Retrovirus-related Pol polyprotein from type-1 retrotransposable element R1 2 (410 aa).

Positions 1–118 constitute a Reverse transcriptase domain; it reads GCPQGSIGGP…SCFRYLGVNV (118 aa). The segment at 254–410 is nucleic acid-binding endonuclease; sequence SSVIKLERLV…RLNLELDVNG (157 aa).

It carries out the reaction DNA(n) + a 2'-deoxyribonucleoside 5'-triphosphate = DNA(n+1) + diphosphate. This is Retrovirus-related Pol polyprotein from type-1 retrotransposable element R1 2 from Nasonia vitripennis (Parasitic wasp).